The chain runs to 179 residues: Ribosome maturation factor RimM (179 aa).

One can recognise a PRC barrel domain in the interval 100 to 176; it reads KEEFHLLELI…FIIINPPNGL (77 aa).

It belongs to the RimM family. As to quaternary structure, binds ribosomal protein uS19.

It is found in the cytoplasm. In terms of biological role, an accessory protein needed during the final step in the assembly of 30S ribosomal subunit, possibly for assembly of the head region. Essential for efficient processing of 16S rRNA. May be needed both before and after RbfA during the maturation of 16S rRNA. It has affinity for free ribosomal 30S subunits but not for 70S ribosomes. The protein is Ribosome maturation factor RimM of Prochlorococcus marinus (strain MIT 9215).